The chain runs to 46 residues: DNA-directed RNA polymerase subunit Rpo12 (46 aa).

Residues cysteine 9, cysteine 24, and cysteine 27 each contribute to the Zn(2+) site.

It belongs to the archaeal Rpo12/eukaryotic RPC10 RNA polymerase subunit family. Part of the RNA polymerase complex. Interacts with Rpo3. Forms an Rpo3-Rpo10-Rpo11-Rpo12 complex upon coexpression. It depends on Zn(2+) as a cofactor.

The protein localises to the cytoplasm. It catalyses the reaction RNA(n) + a ribonucleoside 5'-triphosphate = RNA(n+1) + diphosphate. Its function is as follows. DNA-dependent RNA polymerase (RNAP) catalyzes the transcription of DNA into RNA using the four ribonucleoside triphosphates as substrates. The sequence is that of DNA-directed RNA polymerase subunit Rpo12 from Methanocaldococcus jannaschii (strain ATCC 43067 / DSM 2661 / JAL-1 / JCM 10045 / NBRC 100440) (Methanococcus jannaschii).